Reading from the N-terminus, the 291-residue chain is Trimeric intracellular cation channel type B (291 aa).

At 1–15 (MESPWNELTLAFSRT) the chain is on the lumenal side. A helical transmembrane segment spans residues 16–33 (SMFPFFDIAHYLVSVMAL). Over 34–47 (KHQPGAAALAWKNP) the chain is Cytoplasmic. The helical transmembrane segment at 48–69 (LSSWFTAMLHCFGGGILSCVLL) threads the bilayer. The Lumenal segment spans residues 70–80 (AEPPLRFLANN). The chain crosses the membrane as a helical span at residues 81–100 (TNILLASSIWYIAFFCPCDL). Over 101-103 (ISQ) the chain is Cytoplasmic. A helical membrane pass occupies residues 104–122 (AYSFLPVQLLAAGMKEVTR). Residues Lys118 and Arg122 each contribute to the a 1,2-diacyl-sn-glycero-3-phospho-(1D-myo-inositol-4,5-bisphosphate) site. Residues 123-138 (TWKIVGGVTHANSYYK) are Lumenal-facing. A helical transmembrane segment spans residues 139–156 (NGWIVMIAVGWARGAGGS). At 157–179 (IITNFEQLVKGCWKPEAEEWLKM) the chain is on the cytoplasmic side. A helical membrane pass occupies residues 180-196 (SYPAKVTLLGSVIFTFQ). At 197-207 (QTKYLAISKHN) the chain is on the lumenal side. The chain crosses the membrane as a helical span at residues 208–225 (LMFLFTVFLVATKITMMI). Topologically, residues 226 to 291 (TKTALVPFAC…VKKKHSKKTE (66 aa)) are cytoplasmic. A disordered region spans residues 257–291 (KSETKSSFNGTGSSTSKPVANASDKVKKKHSKKTE). The span at 261-274 (KSSFNGTGSSTSKP) shows a compositional bias: polar residues. Ser262 is subject to Phosphoserine. Positions 282-291 (VKKKHSKKTE) are enriched in basic residues.

The protein belongs to the TMEM38 family. In terms of assembly, homotrimer; conformation seems to be controled by binding to diacylglycerol (DAG).

The protein resides in the endoplasmic reticulum membrane. The enzyme catalyses K(+)(in) = K(+)(out). Channel activity is activated by increased cytosolic Ca(2+) levels and blocked by luminal high Ca(2+) levels. In terms of biological role, intracellular monovalent cation channel required for maintenance of rapid intracellular calcium release. Acts as a potassium counter-ion channel that functions in synchronization with calcium release from intracellular stores. Activated by increased cytosolic Ca(2+) levels. The polypeptide is Trimeric intracellular cation channel type B (TMEM38B) (Bos taurus (Bovine)).